A 120-amino-acid chain; its full sequence is Secreted effector PIT2 (120 aa).

A signal peptide spans 1-25 (MLFRSAFVLLIVAFASACLVQHVQA). The interval 46-59 (KLNRRWWFGFTGSL) is PID14 protease inhibitor domain.

Interacts with host cysteine proteases CP1A, CP1B, XCP2 and CP2. In terms of processing, cleaved by host target papain-like cysteine proteases (PLCPs) to release the embedded inhibitor peptide PID14.

The protein localises to the secreted. Its function is as follows. Secreted effector required for virulence. Functions as an inhibitor of a set of apoplastic maize papain-like cysteine proteases (PLCPs) including CP1A, CP1B, XCP2 and CP2, whose activity is directly linked with salicylic-acid-associated plant defenses. Acts as a substrate mimicking molecule for apoplastic PLCPs and its processing releases the embedded inhibitor peptide PID14, which in turn blocks PLCPs to modulate host immunity. This Mycosarcoma maydis (Corn smut fungus) protein is Secreted effector PIT2.